The primary structure comprises 70 residues: ATP synthase subunit epsilon, mitochondrial (70 aa).

This sequence belongs to the eukaryotic ATPase epsilon family. In terms of assembly, F-type ATPases have 2 components, CF(1) - the catalytic core - and CF(0) - the membrane proton channel. CF(1) has five subunits: alpha(3), beta(3), gamma(1), delta(1), epsilon(1). CF(0) has three main subunits: a, b and c.

The protein resides in the mitochondrion. It localises to the mitochondrion inner membrane. Mitochondrial membrane ATP synthase (F(1)F(0) ATP synthase or Complex V) produces ATP from ADP in the presence of a proton gradient across the membrane which is generated by electron transport complexes of the respiratory chain. F-type ATPases consist of two structural domains, F(1) - containing the extramembraneous catalytic core, and F(0) - containing the membrane proton channel, linked together by a central stalk and a peripheral stalk. During catalysis, ATP synthesis in the catalytic domain of F(1) is coupled via a rotary mechanism of the central stalk subunits to proton translocation. Part of the complex F(1) domain and of the central stalk which is part of the complex rotary element. Rotation of the central stalk against the surrounding alpha(3)beta(3) subunits leads to hydrolysis of ATP in three separate catalytic sites on the beta subunits. This chain is ATP synthase subunit epsilon, mitochondrial, found in Zea mays (Maize).